Consider the following 438-residue polypeptide: Aspartate--tRNA(Asp) ligase (438 aa).

Glu170 contacts L-aspartate. Positions 192–195 (QLYK) are aspartate. Position 214 (Arg214) interacts with L-aspartate. ATP contacts are provided by residues 214–216 (RAE), 222–224 (RHL), and Glu361. 2 residues coordinate Mg(2+): Glu361 and Ser364. Ser364 and Arg368 together coordinate L-aspartate. An ATP-binding site is contributed by 409–412 (GAER).

Belongs to the class-II aminoacyl-tRNA synthetase family. Type 2 subfamily. Homodimer. Requires Mg(2+) as cofactor.

Its subcellular location is the cytoplasm. It catalyses the reaction tRNA(Asp) + L-aspartate + ATP = L-aspartyl-tRNA(Asp) + AMP + diphosphate. Catalyzes the attachment of L-aspartate to tRNA(Asp) in a two-step reaction: L-aspartate is first activated by ATP to form Asp-AMP and then transferred to the acceptor end of tRNA(Asp). Is specific for tRNA(Asp) since it aspartylates tRNA(Asn) 3 orders of magnitude less efficiently than tRNA(Asp). The chain is Aspartate--tRNA(Asp) ligase from Thermococcus kodakarensis (strain ATCC BAA-918 / JCM 12380 / KOD1) (Pyrococcus kodakaraensis (strain KOD1)).